The following is a 260-amino-acid chain: Dehydrogenase/reductase SDR family member 4 (260 aa).

18 to 42 is an NADP(+) binding site; the sequence is IVTASTDGIGLAIARRLAQDGAHVV. Lys-74 bears the N6-acetyllysine; alternate mark. Lys-74 is subject to N6-succinyllysine; alternate. Ser-151 is a binding site for substrate. Tyr-164 functions as the Proton acceptor in the catalytic mechanism. Lys-168 is a binding site for NADP(+). The residue at position 198 (Lys-198) is an N6-acetyllysine; alternate. Lys-198 carries the post-translational modification N6-succinyllysine; alternate. Ser-202 carries the post-translational modification Phosphoserine. An N6-succinyllysine modification is found at Lys-209. The Peroxisomal targeting signal motif lies at 258-260; sequence SRL.

It belongs to the short-chain dehydrogenases/reductases (SDR) family. As to quaternary structure, homotetramer. As to expression, detected in liver and kidney. Detected at lower levels in heart, lung, spleen, small intestine, testis, brain and stomach.

The protein localises to the peroxisome. It catalyses the reaction a secondary alcohol + NADP(+) = a ketone + NADPH + H(+). It carries out the reaction 3alpha-hydroxy-5beta-pregnan-20-one + NADP(+) = 5beta-pregnan-3,20-dione + NADPH + H(+). The catalysed reaction is 5beta-dihydrotestosterone + NADPH + H(+) = 5beta-androstane-3alpha,17beta-diol + NADP(+). The enzyme catalyses all-trans-retinol + NADP(+) = all-trans-retinal + NADPH + H(+). It catalyses the reaction isatin + NADPH + H(+) = 3-hydroxyindolin-2-one + NADP(+). With respect to regulation, inhibited by flavonoids (kaempferol, quercetin, quercitrin, genistein), myristic acid, pyrazole, barbital, phenobarbital and CuSO4. Its function is as follows. NADPH-dependent oxidoreductase which catalyzes the reduction of a variety of compounds bearing carbonyl groups including ketosteroids, alpha-dicarbonyl compounds, aldehydes, aromatic ketones and quinones. Reduces all-trans-retinal and 9-cis retinal. Reduces 3-ketosteroids and benzil into 3alpha-hydroxysteroids and S-benzoin, respectively, in contrast to the stereoselectivity of primates DHRS4s which produce 3beta-hydroxysteroids and R-benzoin. In the reverse reaction, catalyze the NADP-dependent oxidation of 3alpha-hydroxysteroids and alcohol, but with much lower efficiency. Involved in the metabolism of 3alpha-hydroxysteroids, retinoid, isatin and xenobiotic carbonyl compounds. This Oryctolagus cuniculus (Rabbit) protein is Dehydrogenase/reductase SDR family member 4 (DHRS4).